Here is a 437-residue protein sequence, read N- to C-terminus: Proline--tRNA ligase (437 aa).

The protein belongs to the class-II aminoacyl-tRNA synthetase family. ProS type 2 subfamily. As to quaternary structure, homodimer.

The protein localises to the cytoplasm. The catalysed reaction is tRNA(Pro) + L-proline + ATP = L-prolyl-tRNA(Pro) + AMP + diphosphate. Functionally, catalyzes the attachment of proline to tRNA(Pro) in a two-step reaction: proline is first activated by ATP to form Pro-AMP and then transferred to the acceptor end of tRNA(Pro). In Rhizorhabdus wittichii (strain DSM 6014 / CCUG 31198 / JCM 15750 / NBRC 105917 / EY 4224 / RW1) (Sphingomonas wittichii), this protein is Proline--tRNA ligase.